The chain runs to 263 residues: Microtubule-associated protein RP/EB family member 1 (263 aa).

Residues 14–116 (NLSRHDMLAW…FVQWFKKFFD (103 aa)) enclose the Calponin-homology (CH) domain. The segment at 150 to 182 (KPLGTGSAGPQRPIVAQRTPATPKGGTGMVKKA) is disordered. Positions 180–250 (KKAAGDDESA…LYATDEGFVI (71 aa)) constitute an EB1 C-terminal domain.

This sequence belongs to the MAPRE family.

The protein localises to the cytoplasm. The protein resides in the cytoskeleton. It localises to the microtubule organizing center. Its subcellular location is the centrosome. It is found in the golgi apparatus. The protein localises to the spindle. The protein resides in the spindle pole. Plus-end tracking protein (+TIP) that binds to the plus-end of microtubules and regulates the dynamics of the microtubule cytoskeleton. Promotes cytoplasmic microtubule nucleation and elongation. Involved in mitotic spindle positioning by stabilizing microtubules and promoting dynamic connection between astral microtubules and the cortex during mitotic chromosome segregation. This Coturnix japonica (Japanese quail) protein is Microtubule-associated protein RP/EB family member 1 (MAPRE1).